The primary structure comprises 338 residues: 1-aminocyclopropane-1-carboxylate deaminase (338 aa).

Position 51 is an N6-(pyridoxal phosphate)lysine (Lys-51). The Nucleophile role is filled by Ser-78.

The protein belongs to the ACC deaminase/D-cysteine desulfhydrase family. As to quaternary structure, homotrimer. Requires pyridoxal 5'-phosphate as cofactor.

The enzyme catalyses 1-aminocyclopropane-1-carboxylate + H2O = 2-oxobutanoate + NH4(+). Functionally, catalyzes a cyclopropane ring-opening reaction, the irreversible conversion of 1-aminocyclopropane-1-carboxylate (ACC) to ammonia and alpha-ketobutyrate. Allows growth on ACC as a nitrogen source. The chain is 1-aminocyclopropane-1-carboxylate deaminase from Acidovorax ebreus (strain TPSY) (Diaphorobacter sp. (strain TPSY)).